The chain runs to 244 residues: Gas vesicle protein F (244 aa).

The N-terminus stretch occupies residues 1–109 (MTVGLYLYGI…QLKELFAKLS (109 aa)). A C-terminus, modifed ferredoxin fold region spans residues 110–233 (GQREVSIKIF…GDRLRIRYNN (124 aa)). Residues 234-244 (LTAPYTFAQLI) form a C-tail region.

This sequence belongs to the gas vesicle GvpF/GvpL family. Binds GvpA.

The protein localises to the gas vesicle. A minor component of the gas vesicle, may be involved in preventing GvpA aggregation during gas vesicle nucleation. Gas vesicles (GV) are hollow, gas filled proteinaceous nanostructures. During planktonic growth they allow positioning of the organism at a favorable depth for light or nutrient acquisition. The protein is Gas vesicle protein F of Microcystis aeruginosa (strain PCC 7806).